We begin with the raw amino-acid sequence, 147 residues long: Large ribosomal subunit protein uL13 (147 aa).

Residues 126–147 are disordered; sequence AGPTHPHQAQQPVPYEIKQVAQ.

Belongs to the universal ribosomal protein uL13 family. In terms of assembly, part of the 50S ribosomal subunit.

Its function is as follows. This protein is one of the early assembly proteins of the 50S ribosomal subunit, although it is not seen to bind rRNA by itself. It is important during the early stages of 50S assembly. This chain is Large ribosomal subunit protein uL13, found in Parafrankia sp. (strain EAN1pec).